We begin with the raw amino-acid sequence, 143 residues long: Holo-[acyl-carrier-protein] synthase (143 aa).

Aspartate 9 and glutamate 63 together coordinate Mg(2+).

The protein belongs to the P-Pant transferase superfamily. AcpS family. Mg(2+) serves as cofactor.

It is found in the cytoplasm. The enzyme catalyses apo-[ACP] + CoA = holo-[ACP] + adenosine 3',5'-bisphosphate + H(+). Functionally, transfers the 4'-phosphopantetheine moiety from coenzyme A to a Ser of acyl-carrier-protein. This chain is Holo-[acyl-carrier-protein] synthase, found in Burkholderia mallei (strain NCTC 10247).